Here is a 312-residue protein sequence, read N- to C-terminus: Ribosomal RNA small subunit methyltransferase H (312 aa).

S-adenosyl-L-methionine-binding positions include 33–35, Asp53, Phe80, Asp101, and Gln108; that span reads GGH.

It belongs to the methyltransferase superfamily. RsmH family.

Its subcellular location is the cytoplasm. The enzyme catalyses cytidine(1402) in 16S rRNA + S-adenosyl-L-methionine = N(4)-methylcytidine(1402) in 16S rRNA + S-adenosyl-L-homocysteine + H(+). Functionally, specifically methylates the N4 position of cytidine in position 1402 (C1402) of 16S rRNA. This is Ribosomal RNA small subunit methyltransferase H from Desulfosudis oleivorans (strain DSM 6200 / JCM 39069 / Hxd3) (Desulfococcus oleovorans).